The sequence spans 341 residues: DNA-directed RNA polymerase subunit alpha (341 aa).

Positions 1-233 (MVREEVPVST…DLFIPFLHAE (233 aa)) are alpha N-terminal domain (alpha-NTD). Positions 266-341 (IILKRIFIDQ…LKNSNQFESR (76 aa)) are alpha C-terminal domain (alpha-CTD).

Belongs to the RNA polymerase alpha chain family. In terms of assembly, in plastids the minimal PEP RNA polymerase catalytic core is composed of four subunits: alpha, beta, beta', and beta''. When a (nuclear-encoded) sigma factor is associated with the core the holoenzyme is formed, which can initiate transcription.

The protein resides in the plastid. Its subcellular location is the chloroplast. The enzyme catalyses RNA(n) + a ribonucleoside 5'-triphosphate = RNA(n+1) + diphosphate. DNA-dependent RNA polymerase catalyzes the transcription of DNA into RNA using the four ribonucleoside triphosphates as substrates. This chain is DNA-directed RNA polymerase subunit alpha, found in Nymphaea alba (White water-lily).